The sequence spans 175 residues: Peptide methionine sulfoxide reductase MsrA (175 aa).

Cys-10 is a catalytic residue.

This sequence belongs to the MsrA Met sulfoxide reductase family.

The enzyme catalyses L-methionyl-[protein] + [thioredoxin]-disulfide + H2O = L-methionyl-(S)-S-oxide-[protein] + [thioredoxin]-dithiol. It catalyses the reaction [thioredoxin]-disulfide + L-methionine + H2O = L-methionine (S)-S-oxide + [thioredoxin]-dithiol. Has an important function as a repair enzyme for proteins that have been inactivated by oxidation. Catalyzes the reversible oxidation-reduction of methionine sulfoxide in proteins to methionine. The protein is Peptide methionine sulfoxide reductase MsrA of Clavibacter michiganensis subsp. michiganensis (strain NCPPB 382).